An 873-amino-acid chain; its full sequence is Tetratricopeptide repeat protein 16 (873 aa).

A disordered region spans residues 1–20 (MTDSDEDALKVDQGPSRDIP). TPR repeat units lie at residues 61 to 94 (VREY…DPQL), 96 to 128 (DFYA…QQDN), 136 to 169 (TFVL…QPEK), 251 to 284 (AQQA…NPLD), 285 to 318 (PSLF…VTED), 331 to 364 (LLTY…EQQE), 365 to 398 (KGLY…SPQD), and 406 to 439 (GLLQ…NPQK). Disordered regions lie at residues 553-626 (EELK…TSET) and 639-873 (SATA…YEAV). Positions 571–582 (GEAEAPEEEEEK) are enriched in acidic residues. Basic and acidic residues predominate over residues 583–593 (EKEKKEEKKSE). Composition is skewed to polar residues over residues 600–626 (ASLS…TSET), 639–663 (SATA…NNRE), and 675–693 (TQGQ…SQRR). Residues 694–708 (NSSKTKATIHKRNSS) show a composition bias toward basic residues. The segment covering 709 to 750 (KTKATQSQRRNSSKTRATQGQGQSSSKTEATQGQRQSSSEIE) has biased composition (polar residues). Residues 763 to 784 (KTTRSPRQRPRKVKAARGRSWR) are compositionally biased toward basic residues. Composition is skewed to polar residues over residues 800–828 (RSST…GQRS) and 836–860 (GKSQ…SLSK).

This chain is Tetratricopeptide repeat protein 16 (TTC16), found in Homo sapiens (Human).